We begin with the raw amino-acid sequence, 95 residues long: MAHFKDDLQTNVEIIPGESAPRKESPRPPAPPSSAAGVGGCSNHSPSVQESPLSPPALAQLGSAQQPSMRTELSFSEKKDTMIIWQITITVWCQR.

The interval 1-73 (MAHFKDDLQT…AQQPSMRTEL (73 aa)) is disordered. 2 stretches are compositionally biased toward polar residues: residues 42–52 (SNHSPSVQESP) and 62–73 (GSAQQPSMRTEL).

This is an uncharacterized protein from Homo sapiens (Human).